A 383-amino-acid polypeptide reads, in one-letter code: Glutamyl-tRNA reductase (383 aa).

Substrate contacts are provided by residues T38–R41, S82, E87–Q89, and Q93. C39 acts as the Nucleophile in catalysis. Residue G161–A166 participates in NADP(+) binding.

The protein belongs to the glutamyl-tRNA reductase family. As to quaternary structure, homodimer.

The catalysed reaction is (S)-4-amino-5-oxopentanoate + tRNA(Glu) + NADP(+) = L-glutamyl-tRNA(Glu) + NADPH + H(+). The protein operates within porphyrin-containing compound metabolism; protoporphyrin-IX biosynthesis; 5-aminolevulinate from L-glutamyl-tRNA(Glu): step 1/2. In terms of biological role, catalyzes the NADPH-dependent reduction of glutamyl-tRNA(Glu) to glutamate 1-semialdehyde (GSA). This is Glutamyl-tRNA reductase from Methanococcus aeolicus (strain ATCC BAA-1280 / DSM 17508 / OCM 812 / Nankai-3).